Here is a 495-residue protein sequence, read N- to C-terminus: Amidophosphoribosyltransferase (495 aa).

The segment at 1 to 22 (MFPPSSDLTELNDGQPLSGHHA) is disordered. Residues 1–28 (MFPPSSDLTELNDGQPLSGHHADKPEEA) constitute a propeptide that is removed on maturation. Cysteine 29 functions as the Nucleophile in the catalytic mechanism. The Glutamine amidotransferase type-2 domain occupies 29 to 254 (CGVFGIYAPE…AGELVHITES (226 aa)). Cysteine 270 provides a ligand contact to [4Fe-4S] cluster. Residues serine 317, aspartate 379, and aspartate 380 each coordinate Mg(2+). [4Fe-4S] cluster is bound by residues cysteine 416, cysteine 467, and cysteine 470.

The protein in the C-terminal section; belongs to the purine/pyrimidine phosphoribosyltransferase family. Mg(2+) serves as cofactor. Requires [4Fe-4S] cluster as cofactor.

It catalyses the reaction 5-phospho-beta-D-ribosylamine + L-glutamate + diphosphate = 5-phospho-alpha-D-ribose 1-diphosphate + L-glutamine + H2O. It functions in the pathway purine metabolism; IMP biosynthesis via de novo pathway; N(1)-(5-phospho-D-ribosyl)glycinamide from 5-phospho-alpha-D-ribose 1-diphosphate: step 1/2. Catalyzes the formation of phosphoribosylamine from phosphoribosylpyrophosphate (PRPP) and glutamine. The polypeptide is Amidophosphoribosyltransferase (Synechocystis sp. (strain ATCC 27184 / PCC 6803 / Kazusa)).